The primary structure comprises 948 residues: RNA polymerase-associated protein RapA (948 aa).

Residues 164-332 (EVADRIAPRV…FARLRLLDPN (169 aa)) enclose the Helicase ATP-binding domain. 177–184 (DEVGLGKT) serves as a coordination point for ATP. The DEAH box motif lies at 278 to 281 (DEAH). Positions 473 to 627 (RVDWLIDTLK…TCPTGNALQH (155 aa)) constitute a Helicase C-terminal domain.

The protein belongs to the SNF2/RAD54 helicase family. RapA subfamily. As to quaternary structure, interacts with the RNAP. Has a higher affinity for the core RNAP than for the holoenzyme. Its ATPase activity is stimulated by binding to RNAP.

Its function is as follows. Transcription regulator that activates transcription by stimulating RNA polymerase (RNAP) recycling in case of stress conditions such as supercoiled DNA or high salt concentrations. Probably acts by releasing the RNAP, when it is trapped or immobilized on tightly supercoiled DNA. Does not activate transcription on linear DNA. Probably not involved in DNA repair. The sequence is that of RNA polymerase-associated protein RapA from Pseudomonas syringae pv. syringae (strain B728a).